Reading from the N-terminus, the 220-residue chain is Deoxyribose-phosphate aldolase (220 aa).

Catalysis depends on D89, which acts as the Proton donor/acceptor. The active-site Schiff-base intermediate with acetaldehyde is K151. K180 functions as the Proton donor/acceptor in the catalytic mechanism.

The protein belongs to the DeoC/FbaB aldolase family. DeoC type 1 subfamily.

Its subcellular location is the cytoplasm. The catalysed reaction is 2-deoxy-D-ribose 5-phosphate = D-glyceraldehyde 3-phosphate + acetaldehyde. It participates in carbohydrate degradation; 2-deoxy-D-ribose 1-phosphate degradation; D-glyceraldehyde 3-phosphate and acetaldehyde from 2-deoxy-alpha-D-ribose 1-phosphate: step 2/2. Catalyzes a reversible aldol reaction between acetaldehyde and D-glyceraldehyde 3-phosphate to generate 2-deoxy-D-ribose 5-phosphate. This Mycoplasmopsis pulmonis (strain UAB CTIP) (Mycoplasma pulmonis) protein is Deoxyribose-phosphate aldolase.